We begin with the raw amino-acid sequence, 376 residues long: Ribosomal RNA large subunit methyltransferase G (376 aa).

The protein belongs to the methyltransferase superfamily. RlmG family.

It is found in the cytoplasm. It catalyses the reaction guanosine(1835) in 23S rRNA + S-adenosyl-L-methionine = N(2)-methylguanosine(1835) in 23S rRNA + S-adenosyl-L-homocysteine + H(+). Its function is as follows. Specifically methylates the guanine in position 1835 (m2G1835) of 23S rRNA. In Klebsiella pneumoniae (strain 342), this protein is Ribosomal RNA large subunit methyltransferase G.